Consider the following 786-residue polypeptide: Endonuclease MutS2 (786 aa).

An ATP-binding site is contributed by G335–T342. Residues L711–K786 enclose the Smr domain.

Belongs to the DNA mismatch repair MutS family. MutS2 subfamily. As to quaternary structure, homodimer. Binds to stalled ribosomes, contacting rRNA.

In terms of biological role, endonuclease that is involved in the suppression of homologous recombination and thus may have a key role in the control of bacterial genetic diversity. Its function is as follows. Acts as a ribosome collision sensor, splitting the ribosome into its 2 subunits. Detects stalled/collided 70S ribosomes which it binds and splits by an ATP-hydrolysis driven conformational change. Acts upstream of the ribosome quality control system (RQC), a ribosome-associated complex that mediates the extraction of incompletely synthesized nascent chains from stalled ribosomes and their subsequent degradation. Probably generates substrates for RQC. The polypeptide is Endonuclease MutS2 (Bacillus cereus (strain B4264)).